The sequence spans 459 residues: MSLRIYNTLSRELEEFSPLQPGRVRMYVCGMTVYDLCHLGHARSMIAFDLVQRWLKASGLAVTYVRNITDIDDKIIRRAVENGETIRSLTDRMIDALHEDADALGIERPTHEPRATDYIPQMLSMIGTLEKKGLAYRAENGDVNYAVRKFPGYGKLSGKSIDELHAGERVAVLDGKDDPLDPVLWKSAKPSEPEEVKWASEFGPGRPGWHIECSAMACELLGETLDIHGGGEDLQFPHHENEIAQSEGATGKPLANYWMHNGFIVTDNEKMSKSLGNFFLIRDVLKKYDAETIRFFVVRAHYRRPLNYSDVHLDDARASLKRLYTSLDLVAPQALAAIDWNDPYAARFKAAMDEDFATPEAVAVLFDLAGEVNRTQSPAQAGLLKALGGCLNILQDDPKRFLRAGTTLDEATIQAQIDARAAAKAAKNFAEADRIRNDLLAQGIVLKDSPTGTTWAAAQ.

Residue Cys-29 coordinates Zn(2+). Positions 31–41 (MTVYDLCHLGH) match the 'HIGH' region motif. Residues Cys-213, His-238, and Glu-242 each coordinate Zn(2+). Positions 270–274 (KMSKS) match the 'KMSKS' region motif. Position 273 (Lys-273) interacts with ATP.

This sequence belongs to the class-I aminoacyl-tRNA synthetase family. Monomer. It depends on Zn(2+) as a cofactor.

Its subcellular location is the cytoplasm. It carries out the reaction tRNA(Cys) + L-cysteine + ATP = L-cysteinyl-tRNA(Cys) + AMP + diphosphate. This is Cysteine--tRNA ligase from Variovorax paradoxus (strain S110).